The following is a 257-amino-acid chain: 5-oxoprolinase subunit A (257 aa).

Belongs to the LamB/PxpA family. Forms a complex composed of PxpA, PxpB and PxpC.

The catalysed reaction is 5-oxo-L-proline + ATP + 2 H2O = L-glutamate + ADP + phosphate + H(+). In terms of biological role, catalyzes the cleavage of 5-oxoproline to form L-glutamate coupled to the hydrolysis of ATP to ADP and inorganic phosphate. This is 5-oxoprolinase subunit A from Bacillus subtilis (strain 168).